We begin with the raw amino-acid sequence, 1235 residues long: Phosphorylase b kinase regulatory subunit alpha, liver isoform (1235 aa).

A disordered region spans residues 636-655; sequence FSPDSEPDLGGYLEDSSPQE. A phosphoserine mark is found at Ser695, Ser729, and Ser735. The calmodulin-binding stretch occupies residues 807-837; that stretch reads LSELYGKAGLNQEWSLIRYISGLLRKKVEVL. Ser983, Ser1015, and Ser1044 each carry phosphoserine. Residues 1033–1060 are disordered; sequence SIKSVRSSTPSSPTGTSSTDSGGQHLGW. The span at 1039-1055 shows a compositional bias: low complexity; sequence SSTPSSPTGTSSTDSGG. Positions 1059–1099 are calmodulin-binding; it reads GWGEQQGQWLRRRRLDGAINRVPVGFYQKVWKILQKCHGLS. Residue Cys1232 is the site of S-farnesyl cysteine attachment.

The protein belongs to the phosphorylase b kinase regulatory chain family. As to quaternary structure, hexadecamer of 4 heterotetramers, each composed of alpha, beta, gamma, and delta subunits. Alpha (PHKA1 or PHKA2) and beta (PHKB) are regulatory subunits, gamma (PHKG1 or PHKG2) is the catalytic subunit, and delta is calmodulin. Although the final Cys may be farnesylated, the terminal tripeptide is probably not removed, and the C-terminus is not methylated.

The protein resides in the cell membrane. Its pathway is glycan biosynthesis; glycogen metabolism. By phosphorylation of various serine residues and by calcium. In terms of biological role, phosphorylase b kinase catalyzes the phosphorylation of serine in certain substrates, including troponin I. The alpha chain may bind calmodulin. The sequence is that of Phosphorylase b kinase regulatory subunit alpha, liver isoform (Phka2) from Mus musculus (Mouse).